The following is a 247-amino-acid chain: Uridylate kinase (247 aa).

Residue 18–21 coordinates ATP; the sequence is KLSG. Gly60 is a UMP binding site. Residues Gly61 and Arg65 each contribute to the ATP site. UMP contacts are provided by residues Asp80 and 141 to 148; that span reads TGNPFFTT. Thr168, Tyr174, and Asp177 together coordinate ATP.

It belongs to the UMP kinase family. In terms of assembly, homohexamer.

It localises to the cytoplasm. It catalyses the reaction UMP + ATP = UDP + ADP. The protein operates within pyrimidine metabolism; CTP biosynthesis via de novo pathway; UDP from UMP (UMPK route): step 1/1. Inhibited by UTP. Its function is as follows. Catalyzes the reversible phosphorylation of UMP to UDP. The chain is Uridylate kinase from Pseudomonas savastanoi pv. phaseolicola (strain 1448A / Race 6) (Pseudomonas syringae pv. phaseolicola (strain 1448A / Race 6)).